Reading from the N-terminus, the 438-residue chain is Ribosomal protein uS12 methylthiotransferase RimO (438 aa).

One can recognise an MTTase N-terminal domain in the interval His4–Arg120. 6 residues coordinate [4Fe-4S] cluster: Cys13, Cys49, Cys83, Cys144, Cys148, and Cys151. One can recognise a Radical SAM core domain in the interval Leu130 to Ser359. The region spanning Arg362–Gln429 is the TRAM domain.

This sequence belongs to the methylthiotransferase family. RimO subfamily. It depends on [4Fe-4S] cluster as a cofactor.

The protein resides in the cytoplasm. The catalysed reaction is L-aspartate(89)-[ribosomal protein uS12]-hydrogen + (sulfur carrier)-SH + AH2 + 2 S-adenosyl-L-methionine = 3-methylsulfanyl-L-aspartate(89)-[ribosomal protein uS12]-hydrogen + (sulfur carrier)-H + 5'-deoxyadenosine + L-methionine + A + S-adenosyl-L-homocysteine + 2 H(+). Its function is as follows. Catalyzes the methylthiolation of an aspartic acid residue of ribosomal protein uS12. This chain is Ribosomal protein uS12 methylthiotransferase RimO, found in Chlorobium chlorochromatii (strain CaD3).